Here is a 286-residue protein sequence, read N- to C-terminus: Aldo-keto reductase MAV_4483 (286 aa).

The Proton donor role is filled by Tyr-61. Positions 201, 203, 239, 241, 242, 247, and 251 each coordinate NADPH.

It belongs to the aldo/keto reductase family.

This is Aldo-keto reductase MAV_4483 from Mycobacterium avium (strain 104).